Consider the following 186-residue polypeptide: Adenylate kinase isoenzyme 6 homolog (186 aa).

Residues glycine 15, glycine 17, lysine 18, serine 19, and threonine 20 each contribute to the ATP site. Positions 48 to 71 (NLSNIIKDERLYKEFDDELDASIY) are NMPbind. The segment at 126–136 (KRNYTKEKIKN) is LID. Arginine 127 contacts ATP.

It belongs to the adenylate kinase family. AK6 subfamily. In terms of assembly, monomer and homodimer. Interacts with small ribosomal subunit protein uS11. Not a structural component of 43S pre-ribosomes, but transiently interacts with them by binding to uS11.

The protein localises to the cytoplasm. The protein resides in the nucleus. The catalysed reaction is AMP + ATP = 2 ADP. The enzyme catalyses ATP + H2O = ADP + phosphate + H(+). In terms of biological role, broad-specificity nucleoside monophosphate (NMP) kinase that catalyzes the reversible transfer of the terminal phosphate group between nucleoside triphosphates and monophosphates. Also has ATPase activity. Involved in the late cytoplasmic maturation steps of the 40S ribosomal particles, specifically 18S rRNA maturation. While NMP activity is not required for ribosome maturation, ATPase activity is. Associates transiently with small ribosomal subunit protein uS11. ATP hydrolysis breaks the interaction with uS11. May temporarily remove uS11 from the ribosome to enable a conformational change of the ribosomal RNA that is needed for the final maturation step of the small ribosomal subunit. Its NMP activity may have a role in nuclear energy homeostasis. This chain is Adenylate kinase isoenzyme 6 homolog, found in Plasmodium falciparum (isolate 3D7).